The chain runs to 894 residues: Septin and tuftelin-interacting protein 1 homolog (894 aa).

Disordered stretches follow at residues 71 to 149 and 187 to 225; these read YEPN…DKPV and NAGL…RSLG. Positions 73 to 84 are enriched in basic and acidic residues; sequence PNEHKLKNKDGE. Residues 97–126 show a composition bias toward basic residues; that stretch reads KKKKKEKKEKKQKKKEKKEKKEKKNKKKNK. One can recognise a G-patch domain in the interval 149–195; sequence VGGIGAALLSKMGYKGTGGLGRDGGGMVEPIKVQVRPKNAGLASVTE. Over residues 202–217 the composition is skewed to acidic residues; it reads DDSDDSDQSEGDTDSD. Residues 329-449 adopt a coiled-coil conformation; sequence KQIDIQNQDN…SDNNDNSSLE (121 aa). Residues 785–821 form a disordered region; sequence NNNNNNNINNSYQQQNQQQPIKPISSPSLNSSNNNNI.

The protein belongs to the TFP11/STIP family. In terms of assembly, identified in the spliceosome C complex.

It is found in the cytoplasm. The protein resides in the nucleus. Its function is as follows. May be involved in pre-mRNA splicing. The protein is Septin and tuftelin-interacting protein 1 homolog (stip-1) of Dictyostelium discoideum (Social amoeba).